The primary structure comprises 513 residues: 2,3-bisphosphoglycerate-independent phosphoglycerate mutase (513 aa).

Positions 14 and 64 each coordinate Mn(2+). Ser64 serves as the catalytic Phosphoserine intermediate. Residues His125, 155-156, Arg187, Arg193, 259-262, and Lys333 each bind substrate; these read RD and RADR. Residues Asp400, His404, Asp441, His442, and His460 each contribute to the Mn(2+) site.

It belongs to the BPG-independent phosphoglycerate mutase family. Monomer. The cofactor is Mn(2+).

The enzyme catalyses (2R)-2-phosphoglycerate = (2R)-3-phosphoglycerate. It functions in the pathway carbohydrate degradation; glycolysis; pyruvate from D-glyceraldehyde 3-phosphate: step 3/5. Functionally, catalyzes the interconversion of 2-phosphoglycerate and 3-phosphoglycerate. In Pseudomonas fluorescens (strain ATCC BAA-477 / NRRL B-23932 / Pf-5), this protein is 2,3-bisphosphoglycerate-independent phosphoglycerate mutase.